We begin with the raw amino-acid sequence, 71 residues long: DNA-directed RNA polymerase subunit omega (71 aa).

It belongs to the RNA polymerase subunit omega family. In terms of assembly, the RNAP catalytic core consists of 2 alpha, 1 beta, 1 beta' and 1 omega subunit. When a sigma factor is associated with the core the holoenzyme is formed, which can initiate transcription.

It carries out the reaction RNA(n) + a ribonucleoside 5'-triphosphate = RNA(n+1) + diphosphate. In terms of biological role, promotes RNA polymerase assembly. Latches the N- and C-terminal regions of the beta' subunit thereby facilitating its interaction with the beta and alpha subunits. The polypeptide is DNA-directed RNA polymerase subunit omega (Azoarcus sp. (strain BH72)).